A 60-amino-acid chain; its full sequence is Large ribosomal subunit protein uL30 (60 aa).

The protein belongs to the universal ribosomal protein uL30 family. In terms of assembly, part of the 50S ribosomal subunit.

This is Large ribosomal subunit protein uL30 from Thermus thermophilus (strain ATCC BAA-163 / DSM 7039 / HB27).